The following is a 236-amino-acid chain: Small ribosomal subunit protein uS2c (236 aa).

This sequence belongs to the universal ribosomal protein uS2 family.

It localises to the plastid. It is found in the chloroplast. The protein is Small ribosomal subunit protein uS2c (rps2) of Morus indica (Mulberry).